We begin with the raw amino-acid sequence, 427 residues long: Histidine--tRNA ligase (427 aa).

It belongs to the class-II aminoacyl-tRNA synthetase family. Homodimer.

The protein localises to the cytoplasm. It catalyses the reaction tRNA(His) + L-histidine + ATP = L-histidyl-tRNA(His) + AMP + diphosphate + H(+). This chain is Histidine--tRNA ligase, found in Streptococcus suis (strain 98HAH33).